We begin with the raw amino-acid sequence, 216 residues long: ATP phosphoribosyltransferase (216 aa).

This sequence belongs to the ATP phosphoribosyltransferase family. Short subfamily. Heteromultimer composed of HisG and HisZ subunits.

Its subcellular location is the cytoplasm. The enzyme catalyses 1-(5-phospho-beta-D-ribosyl)-ATP + diphosphate = 5-phospho-alpha-D-ribose 1-diphosphate + ATP. Its pathway is amino-acid biosynthesis; L-histidine biosynthesis; L-histidine from 5-phospho-alpha-D-ribose 1-diphosphate: step 1/9. Its function is as follows. Catalyzes the condensation of ATP and 5-phosphoribose 1-diphosphate to form N'-(5'-phosphoribosyl)-ATP (PR-ATP). Has a crucial role in the pathway because the rate of histidine biosynthesis seems to be controlled primarily by regulation of HisG enzymatic activity. The protein is ATP phosphoribosyltransferase of Rubrobacter xylanophilus (strain DSM 9941 / JCM 11954 / NBRC 16129 / PRD-1).